The chain runs to 341 residues: Retinol dehydrogenase 10-A (341 aa).

A helical; Signal-anchor transmembrane segment spans residues 3–23; the sequence is IVLEFFLVTFRVLWAFVLAAG. An NADP(+)-binding site is contributed by 40–64; the sequence is LITGAGSGLGRLFALEFARRRAQLV. S197 contacts substrate. Y210 serves as the catalytic Proton acceptor.

The protein belongs to the short-chain dehydrogenases/reductases (SDR) family.

The protein localises to the microsome membrane. It is found in the endoplasmic reticulum membrane. It carries out the reaction all-trans-retinol + NADP(+) = all-trans-retinal + NADPH + H(+). It functions in the pathway cofactor metabolism; retinol metabolism. Functionally, retinol dehydrogenase with a clear preference for NADP. Converts all-trans-retinol to all-trans-retinal. Has no detectable activity towards 11-cis-retinol, 9-cis-retinol and 13-cis-retinol. The sequence is that of Retinol dehydrogenase 10-A (rdh10-a) from Xenopus laevis (African clawed frog).